A 113-amino-acid chain; its full sequence is Parvalbumin beta (113 aa).

Residue alanine 1 is modified to N-acetylalanine. Cysteine 18 carries an S-linked (Glc) cysteine glycan. EF-hand domains follow at residues 38 to 73 (FSADELKKLFKIADEDKEGFIEEDELKLFLIAFAAD) and 77 to 112 (LTDAETKAFLKAGDSDGDGKIGVDEFGALVDKWGAK). The Ca(2+) site is built by aspartate 51, aspartate 53, glutamate 55, phenylalanine 57, glutamate 59, glutamate 62, aspartate 90, aspartate 92, aspartate 94, lysine 96, and glutamate 101.

It belongs to the parvalbumin family. Muscle (at protein level).

In terms of biological role, in muscle, parvalbumin is thought to be involved in relaxation after contraction. It binds two calcium ions. The chain is Parvalbumin beta from Gadus morhua subsp. callarias (Baltic cod).